A 394-amino-acid chain; its full sequence is Fructose-bisphosphate aldolase, chloroplastic (394 aa).

The transit peptide at 1–46 (MASASLLKTSPVLDNPEFLKGQTLRIPSVAGVRFTPSGSSSLTVRA) directs the protein to the chloroplast. 2 residues coordinate substrate: Arg-93 and Lys-183. The Proton acceptor role is filled by Glu-223. Lys-265 (schiff-base intermediate with dihydroxyacetone-P) is an active-site residue.

This sequence belongs to the class I fructose-bisphosphate aldolase family.

Its subcellular location is the plastid. The protein localises to the chloroplast. The catalysed reaction is beta-D-fructose 1,6-bisphosphate = D-glyceraldehyde 3-phosphate + dihydroxyacetone phosphate. It participates in carbohydrate degradation; glycolysis; D-glyceraldehyde 3-phosphate and glycerone phosphate from D-glucose: step 4/4. The chain is Fructose-bisphosphate aldolase, chloroplastic from Spinacia oleracea (Spinach).